The chain runs to 1067 residues: Myocardin-related transcription factor B (1067 aa).

RPEL repeat units lie at residues 46-71, 90-115, and 134-159; these read EVLQLRLQQRRTREQLVDQGIMPPLK, NFLKHKIRSRPNRSELVRMHILEETL, and DDLNEKIAQRPGPLELVEKNILPVDL. Disordered regions lie at residues 175 to 223 and 249 to 286; these read NLDT…NTTI and PLSCIVSKPGPALIKQTQPKHTEKPRSKKSKDPKPRVK. Polar residues-rich tracts occupy residues 193–203 and 212–223; these read QPASQESQGSA and SDSSSPVSNTTI. Over residues 268–283 the composition is skewed to basic and acidic residues; it reads KHTEKPRSKKSKDPKP. In terms of domain architecture, SAP spans 390–424; that stretch reads LDDMKVAELKMELKLRGLPVSGTKMDLIERLKPFQ. The stretch at 540–594 forms a coiled coil; that stretch reads GNTPNVELDAVEKDRKLQEKEKQIEELKRKLEQEQKLVEVLKKQLELEKRGQQQQ. The span at 799–819 shows a compositional bias: polar residues; that stretch reads ISTSAQPQRSTQLTAVQNGPT. The interval 799–829 is disordered; it reads ISTSAQPQRSTQLTAVQNGPTSLHEKSSTPP.

In terms of assembly, interacts with SRF.

It is found in the nucleus. Poor transcriptional factor which uses the canonical single or multiple CArG boxes DNA sequence. Acts as a cofactor of serum response factor (SRF) with the potential to modulate SRF target genes. The sequence is that of Myocardin-related transcription factor B (mrtfb) from Xenopus laevis (African clawed frog).